Consider the following 224-residue polypeptide: Phosphoglycolate phosphatase (224 aa).

The Nucleophile role is filled by Asp-8. Asp-8 and Asp-10 together coordinate Mg(2+). Lys-151 contacts substrate. Asp-174 and Asp-178 together coordinate Mg(2+).

The protein belongs to the archaeal SPP-like hydrolase family. Mg(2+) serves as cofactor.

It carries out the reaction 2-phosphoglycolate + H2O = glycolate + phosphate. Its function is as follows. Catalyzes the dephosphorylation of 2-phosphoglycolate. In Thermoplasma volcanium (strain ATCC 51530 / DSM 4299 / JCM 9571 / NBRC 15438 / GSS1), this protein is Phosphoglycolate phosphatase.